Here is a 169-residue protein sequence, read N- to C-terminus: Ribonuclease H (169 aa).

The region spanning 3 to 159 (AHAALTLYTD…CDRLATDAAR (157 aa)) is the RNase H type-1 domain. Mg(2+)-binding residues include D12, E63, D87, and D151.

The protein belongs to the RNase H family. As to quaternary structure, monomer. Requires Mg(2+) as cofactor.

It is found in the cytoplasm. The enzyme catalyses Endonucleolytic cleavage to 5'-phosphomonoester.. Functionally, endonuclease that specifically degrades the RNA of RNA-DNA hybrids. This is Ribonuclease H from Treponema pallidum subsp. pallidum (strain SS14).